The sequence spans 802 residues: Leucine--tRNA ligase (802 aa).

The 'HIGH' region motif lies at 40-51; the sequence is PYPSGAGLHVGH. The 'KMSKS' region signature appears at 576-580; that stretch reads KMSKS. An ATP-binding site is contributed by K579.

This sequence belongs to the class-I aminoacyl-tRNA synthetase family.

It localises to the cytoplasm. The enzyme catalyses tRNA(Leu) + L-leucine + ATP = L-leucyl-tRNA(Leu) + AMP + diphosphate. The sequence is that of Leucine--tRNA ligase from Bacillus cytotoxicus (strain DSM 22905 / CIP 110041 / 391-98 / NVH 391-98).